The sequence spans 79 residues: Sec-independent protein translocase protein TatA (79 aa).

A helical membrane pass occupies residues 1–21 (MGGISIWQLLIILVIVVLLFG). The disordered stretch occupies residues 45-79 (EEEKDADFEQKKQVEEKSAAEPVSTETQSDVKEKS). Positions 51–63 (DFEQKKQVEEKSA) are enriched in basic and acidic residues.

It belongs to the TatA/E family. As to quaternary structure, the Tat system comprises two distinct complexes: a TatABC complex, containing multiple copies of TatA, TatB and TatC subunits, and a separate TatA complex, containing only TatA subunits. Substrates initially bind to the TatABC complex, which probably triggers association of the separate TatA complex to form the active translocon.

The protein resides in the cell inner membrane. Part of the twin-arginine translocation (Tat) system that transports large folded proteins containing a characteristic twin-arginine motif in their signal peptide across membranes. TatA could form the protein-conducting channel of the Tat system. The protein is Sec-independent protein translocase protein TatA of Alteromonas mediterranea (strain DSM 17117 / CIP 110805 / LMG 28347 / Deep ecotype).